The primary structure comprises 156 residues: Small ribosomal subunit protein uS7 (156 aa).

The protein belongs to the universal ribosomal protein uS7 family. As to quaternary structure, part of the 30S ribosomal subunit. Contacts proteins S9 and S11.

One of the primary rRNA binding proteins, it binds directly to 16S rRNA where it nucleates assembly of the head domain of the 30S subunit. Is located at the subunit interface close to the decoding center, probably blocks exit of the E-site tRNA. The protein is Small ribosomal subunit protein uS7 of Erwinia tasmaniensis (strain DSM 17950 / CFBP 7177 / CIP 109463 / NCPPB 4357 / Et1/99).